The following is a 262-amino-acid chain: Large ribosomal subunit protein uL5c (262 aa).

The N-terminal 39 residues, 1–39 (MASPSLLQSSASSFHGRFSPLAAPSSARMLSPPLRNVVK), are a transit peptide targeting the chloroplast.

It belongs to the universal ribosomal protein uL5 family. In terms of assembly, part of the 50S ribosomal subunit; contacts the 5S rRNA.

Its subcellular location is the plastid. It is found in the chloroplast. Its function is as follows. Binds 5S rRNA, forms part of the central protuberance of the 50S subunit. The protein is Large ribosomal subunit protein uL5c (RPL5) of Arabidopsis thaliana (Mouse-ear cress).